We begin with the raw amino-acid sequence, 237 residues long: Endonuclease V (237 aa).

Mg(2+) is bound by residues aspartate 46 and aspartate 114.

This sequence belongs to the endonuclease V family. The cofactor is Mg(2+).

The protein localises to the cytoplasm. It catalyses the reaction Endonucleolytic cleavage at apurinic or apyrimidinic sites to products with a 5'-phosphate.. In terms of biological role, DNA repair enzyme involved in the repair of deaminated bases. Selectively cleaves double-stranded DNA at the second phosphodiester bond 3' to a deoxyinosine leaving behind the intact lesion on the nicked DNA. The chain is Endonuclease V from Xanthomonas axonopodis pv. citri (strain 306).